A 193-amino-acid chain; its full sequence is Major structural subunit of bundle-forming pilus (193 aa).

Residues 1–13 constitute a propeptide that is removed on maturation; that stretch reads MVSKIMNKKYEKG. The residue at position 14 (leucine 14) is an N-methylleucine. Residues 14 to 35 form a helical membrane-spanning segment; that stretch reads LSLIESAMVLALAATVTAGVMF. Cysteine 129 and cysteine 179 are disulfide-bonded.

Belongs to the N-Me-Phe pilin family. In terms of assembly, 10 to 100 laterally aligned filaments or bundle-forming pili coalesce into rope-like bundles. These form linkages between the bacteria within the enteropathogenic E.coli (EPEC) microcolonies that are attached to epithelial cells.

The protein localises to the fimbrium. Its subcellular location is the membrane. Major repeating bundle-forming pilus (BFP) subunit. Is required for EPEC localized adherence. The polypeptide is Major structural subunit of bundle-forming pilus (bfpA) (Escherichia coli O111:H-).